Consider the following 259-residue polypeptide: Indole-3-glycerol phosphate synthase (259 aa).

It belongs to the TrpC family.

It carries out the reaction 1-(2-carboxyphenylamino)-1-deoxy-D-ribulose 5-phosphate + H(+) = (1S,2R)-1-C-(indol-3-yl)glycerol 3-phosphate + CO2 + H2O. It functions in the pathway amino-acid biosynthesis; L-tryptophan biosynthesis; L-tryptophan from chorismate: step 4/5. The protein is Indole-3-glycerol phosphate synthase of Dehalococcoides mccartyi (strain ATCC BAA-2266 / KCTC 15142 / 195) (Dehalococcoides ethenogenes (strain 195)).